The primary structure comprises 623 residues: Glycoprotein (623 aa).

Residues 1–12 form the signal peptide; the sequence is MFKVLIITLLVN. At 13-539 the chain is on the virion surface side; sequence KIHLEKIYNV…FTSTAKAVRW (527 aa). Residues Asn-175, Asn-264, Asn-416, Asn-438, and Asn-507 are each glycosylated (N-linked (GlcNAc...) asparagine; by host). The chain crosses the membrane as a helical span at residues 540–554; the sequence is TIWAVGAIVTTYAIY. At 555-623 the chain is on the intravirion side; it reads KLYKMVKSNS…QTGDDRFFDH (69 aa).

This sequence belongs to the rhabdoviruses glycoprotein family. As to quaternary structure, homotrimer.

It localises to the virion membrane. Functionally, attaches the virus to host cellular receptors, inducing endocytosis of the virion. The acidic pH of the endosome induces conformational changes in the glycoprotein trimer which trigger fusion between the virus and the cell membrane. This chain is Glycoprotein (G), found in Bovine ephemeral fever virus (strain BB7721) (BEFV).